The chain runs to 517 residues: Crotonobetaine/carnitine--CoA ligase (517 aa).

It belongs to the ATP-dependent AMP-binding enzyme family.

The catalysed reaction is 4-(trimethylamino)butanoate + ATP + CoA = 4-(trimethylamino)butanoyl-CoA + AMP + diphosphate. It catalyses the reaction crotonobetaine + ATP + CoA = crotonobetainyl-CoA + AMP + diphosphate. The enzyme catalyses (R)-carnitine + ATP + CoA = (R)-carnitinyl-CoA + AMP + diphosphate. It participates in amine and polyamine metabolism; carnitine metabolism. Functionally, catalyzes the transfer of CoA to carnitine, generating the initial carnitinyl-CoA needed for the CaiB reaction cycle. Also has activity toward crotonobetaine and gamma-butyrobetaine. The sequence is that of Crotonobetaine/carnitine--CoA ligase from Shigella dysenteriae serotype 1 (strain Sd197).